Consider the following 240-residue polypeptide: RNA polymerase sigma factor SigI (240 aa).

The Polymerase core binding signature appears at 56–69; the sequence is DEYSIGLFAFNEAI. Positions 194–213 form a DNA-binding region, H-T-H motif; that stretch reads LKHIEPRVRVSRKTLERHRK.

Belongs to the sigma-70 factor family. SigI subfamily. Interacts with RsgI.

The protein resides in the cytoplasm. With respect to regulation, negatively regulated by the anti-sigma-I factor RsgI. In terms of biological role, sigma factors are initiation factors that promote the attachment of RNA polymerase to specific initiation sites and are then released. This sigma factor contributes to both stress response and virulence gene expression. This chain is RNA polymerase sigma factor SigI, found in Bacillus anthracis.